The following is a 289-amino-acid chain: Homoserine kinase (289 aa).

79 to 89 is a binding site for ATP; it reads PLARGLGSSSS.

The protein belongs to the GHMP kinase family. Homoserine kinase subfamily.

The protein localises to the cytoplasm. It catalyses the reaction L-homoserine + ATP = O-phospho-L-homoserine + ADP + H(+). Its pathway is amino-acid biosynthesis; L-threonine biosynthesis; L-threonine from L-aspartate: step 4/5. Catalyzes the ATP-dependent phosphorylation of L-homoserine to L-homoserine phosphate. The chain is Homoserine kinase from Streptococcus pneumoniae serotype 2 (strain D39 / NCTC 7466).